The primary structure comprises 526 residues: GMP synthase [glutamine-hydrolyzing] (526 aa).

The Glutamine amidotransferase type-1 domain maps to 8-208; the sequence is CILIIDFGSQ…AVDICRCEVT (201 aa). Cysteine 85 acts as the Nucleophile in catalysis. Catalysis depends on residues histidine 182 and glutamate 184. One can recognise a GMPS ATP-PPase domain in the interval 209–401; it reads WKPVYIVKNI…LGLPLNVVNQ (193 aa). 236–242 lines the ATP pocket; that stretch reads SGGIDSL.

Homodimer.

It carries out the reaction XMP + L-glutamine + ATP + H2O = GMP + L-glutamate + AMP + diphosphate + 2 H(+). The protein operates within purine metabolism; GMP biosynthesis; GMP from XMP (L-Gln route): step 1/1. Its function is as follows. Catalyzes the synthesis of GMP from XMP. The chain is GMP synthase [glutamine-hydrolyzing] from Blochmanniella floridana.